We begin with the raw amino-acid sequence, 49 residues long: Large ribosomal subunit protein eL40 (49 aa).

The protein belongs to the eukaryotic ribosomal protein eL40 family.

The sequence is that of Large ribosomal subunit protein eL40 from Natronomonas pharaonis (strain ATCC 35678 / DSM 2160 / CIP 103997 / JCM 8858 / NBRC 14720 / NCIMB 2260 / Gabara) (Halobacterium pharaonis).